Consider the following 186-residue polypeptide: DNA damage up-regulated protein (186 aa).

A disordered region spans residues 147–166; it reads ATENGEGCRPARDPASSPSS.

Interacts with DNA damage response proteins ATR, H2AX, PCNA, RAD18 and RAD51C. Forms a complex with H2AX and RAD18 following DDUP phosphorylation. Phosphorylated in an ATR-dependent manner; phosphorylation is required for interaction with H2AX and RAD18 and for DDUP-mediated DNA damage repair.

Its subcellular location is the nucleus. The protein resides in the chromosome. Promotes DNA damage repair through both homologous recombination repair (HRR) and post-replication repair (PRR) mechanisms. Enhances the retention of DNA damage response protein RAD18 at sites of DNA damage. This allows for HRR via association of RAD18 with RAD51C and for PRR via RAD18-mediated promotion of PCNA monoubiquitination. In Homo sapiens (Human), this protein is DNA damage up-regulated protein.